Consider the following 465-residue polypeptide: Mothers against decapentaplegic homolog 5 (465 aa).

Residue Thr2 is modified to N-acetylthreonine. An MH1 domain is found at 13 to 137 (PAVKRLLGWK…YKRVESPVLP (125 aa)). 4 residues coordinate Zn(2+): Cys65, Cys110, Cys122, and His127. The tract at residues 163-243 (NEPHMPQNAT…GQDNSQPMDT (81 aa)) is disordered. The segment covering 169 to 182 (QNATFPDSFHQPNS) has biased composition (polar residues). Pro residues predominate over residues 186 to 197 (PLSPNSPYPPSP). The segment covering 198 to 214 (ASSTYPNSPASSGPGSP) has biased composition (low complexity). Polar residues predominate over residues 234 to 243 (GQDNSQPMDT). The 195-residue stretch at 271-465 (WCSIVYYELN…SPLNPISSVS (195 aa)) folds into the MH2 domain. Ser463 and Ser465 each carry phosphoserine.

Belongs to the dwarfin/SMAD family. As to quaternary structure, homodimer. Forms trimers with the co-SMAD SMAD4. Interacts with PEBP2-alpha subunit and SMURF1. Interacts with SUV39H1 and SUV39H2. Interacts (via MH2 domain) with LEMD3. Interacts with WWP1. Interacts with TMEM119. Interacts with ZNF8. Interacts with RANBP3L. Interacts with HK1. Interacts with HGS; this interaction attenuates BMP signaling. In terms of processing, phosphorylated on serine by BMP (bone morphogenetic proteins) type 1 receptor kinase. Post-translationally, ubiquitin-mediated proteolysis by SMAD-specific E3 ubiquitin ligase SMURF1.

Its subcellular location is the cytoplasm. The protein localises to the nucleus. It is found in the mitochondrion. In terms of biological role, transcriptional regulator that plays a role in various cellular processes including embryonic development, cell differentiation, angiogenesis and tissue homeostasis. Upon BMP ligand binding to their receptors at the cell surface, is phosphorylated by activated type I BMP receptors (BMPRIs) and associates with SMAD4 to form a heteromeric complex which translocates into the nucleus acting as transcription factor. In turn, the hetero-trimeric complex recognizes cis-regulatory elements containing Smad Binding Elements (SBEs) to modulate the outcome of the signaling network. Non-phosphorylated SMAD5 has a cytoplasmic role in energy metabolism regulation by promoting mitochondrial respiration and glycolysis in response to cytoplasmic pH changes. Mechanistically, interacts with hexokinase 1/HK1 and thereby accelerates glycolysis. The chain is Mothers against decapentaplegic homolog 5 (Smad5) from Rattus norvegicus (Rat).